Consider the following 192-residue polypeptide: Pupal cuticle protein (192 aa).

Residues 1–15 (MHLLMSLFGVLAVMQ) form the signal peptide. The Chitin-binding type R&amp;R domain maps to 45 to 106 (DGNYRYAYET…PVGDHIPKVP (62 aa)). Positions 149–163 (QDQTTPRSRPSSTPK) are enriched in polar residues. The disordered stretch occupies residues 149-192 (QDQTTPRSRPSSTPKTIYLTHPPTLSDAPTRRPLRQRQNDSRRR).

In terms of biological role, component of the cuticle of the pupa of fruit fly. The polypeptide is Pupal cuticle protein (Pcp) (Drosophila pseudoobscura pseudoobscura (Fruit fly)).